We begin with the raw amino-acid sequence, 404 residues long: Keratin, type I microfibrillar, 47.6 kDa (404 aa).

The head stretch occupies residues methionine 1–glutamate 56. Residues glutamate 56–leucine 367 enclose the IF rod domain. Residues lysine 57–arginine 91 form a coil 1A region. The interval serine 92–asparagine 102 is linker 1. A coil 1B region spans residues tyrosine 103–serine 203. The interval glutamine 204 to valine 219 is linker 12. Positions aspartate 220 to glutamate 363 are coil 2. Residues aspartate 364 to histidine 404 form a tail region.

This sequence belongs to the intermediate filament family.

In terms of biological role, wool microfibrillar keratin. This is Keratin, type I microfibrillar, 47.6 kDa from Ovis aries (Sheep).